Reading from the N-terminus, the 404-residue chain is Argininosuccinate synthase (404 aa).

Residues 10 to 18 and Ala-38 contribute to the ATP site; that span reads AYSGGVDTS. Tyr-89 is a binding site for L-citrulline. Residue Gly-119 participates in ATP binding. L-aspartate-binding residues include Thr-121, Asn-125, and Asp-126. Asn-125 provides a ligand contact to L-citrulline. Residues Arg-129, Ser-177, Ser-186, Glu-262, and Tyr-274 each coordinate L-citrulline.

This sequence belongs to the argininosuccinate synthase family. Type 1 subfamily. Homotetramer.

Its subcellular location is the cytoplasm. The catalysed reaction is L-citrulline + L-aspartate + ATP = 2-(N(omega)-L-arginino)succinate + AMP + diphosphate + H(+). It participates in amino-acid biosynthesis; L-arginine biosynthesis; L-arginine from L-ornithine and carbamoyl phosphate: step 2/3. This chain is Argininosuccinate synthase, found in Prochlorococcus marinus subsp. pastoris (strain CCMP1986 / NIES-2087 / MED4).